Reading from the N-terminus, the 314-residue chain is Olfactory receptor 52K2 (314 aa).

Residues 1–27 (MSASNITLTHPTAFLLVGIPGLEHLHI) lie on the Extracellular side of the membrane. N-linked (GlcNAc...) asparagine glycosylation occurs at asparagine 5. Residues 28–48 (WISIPFCLAYTLALLGNCTLL) form a helical membrane-spanning segment. Residues 49 to 56 (LIIQADAA) are Cytoplasmic-facing. A helical transmembrane segment spans residues 57 to 77 (LHEPMYLFLAMLAAIDLVLSS). Residues 78-101 (SALPKMLAIFWFRDREINFFACLA) lie on the Extracellular side of the membrane. Cysteine 99 and cysteine 191 form a disulfide bridge. The helical transmembrane segment at 102–122 (QMFFLHSFSIMESAVLLAMAF) threads the bilayer. Over 123–141 (DRYVAICKPLHYTKVLTGS) the chain is Cytoplasmic. A helical membrane pass occupies residues 142–162 (LITKIGMAAVARAVTLMTPLP). Residues 163 to 198 (FLLRCFHYCRGPVIAHCYCEHMAVVRLACGDTSFNN) lie on the Extracellular side of the membrane. The helical transmembrane segment at 199–219 (IYGIAVAMFIVVLDLLLVILS) threads the bilayer. At 220–239 (YIFILQAVLLLASQEARYKA) the chain is on the cytoplasmic side. The chain crosses the membrane as a helical span at residues 240–260 (FGTCVSHIGAILAFYTTVVIS). Topologically, residues 261 to 275 (SVMHRVARHAAPHVH) are extracellular. Residues 276 to 296 (ILLANFYLLFPPMVNPIIYGV) form a helical membrane-spanning segment. Residues 297–314 (KTKQIRESILGVFPRKDM) lie on the Cytoplasmic side of the membrane.

It belongs to the G-protein coupled receptor 1 family.

Its subcellular location is the cell membrane. Its function is as follows. Odorant receptor. In Homo sapiens (Human), this protein is Olfactory receptor 52K2 (OR52K2).